The chain runs to 201 residues: Prostamide/prostaglandin F synthase (201 aa).

The protein belongs to the peroxiredoxin-like PRXL2 family. Prostamide/prostaglandin F synthase subfamily.

The protein localises to the cytoplasm. The protein resides in the cytosol. It carries out the reaction prostaglandin H2 + [thioredoxin]-dithiol = prostaglandin F2alpha + [thioredoxin]-disulfide. The enzyme catalyses prostamide F2alpha + [thioredoxin]-disulfide = prostamide H2 + [thioredoxin]-dithiol. In terms of biological role, catalyzes the reduction of prostaglandin-ethanolamide H(2) (prostamide H(2)) to prostamide F(2alpha) with NADPH as proton donor. Also able to reduce prostaglandin H(2) to prostaglandin F(2alpha). The polypeptide is Prostamide/prostaglandin F synthase (prxl2b) (Xenopus laevis (African clawed frog)).